The chain runs to 336 residues: Ornithine carbamoyltransferase, catabolic (336 aa).

Carbamoyl phosphate is bound by residues 57 to 60 (STRT), Gln-84, Arg-108, and 135 to 138 (HPTQ). L-ornithine is bound by residues Asn-169, Asp-233, and 237-238 (SM). Residues 275 to 276 (CL) and Arg-322 each bind carbamoyl phosphate.

It belongs to the aspartate/ornithine carbamoyltransferase superfamily. OTCase family.

The protein localises to the cytoplasm. It catalyses the reaction carbamoyl phosphate + L-ornithine = L-citrulline + phosphate + H(+). Its pathway is amino-acid degradation; L-arginine degradation via ADI pathway; carbamoyl phosphate from L-arginine: step 2/2. In terms of biological role, reversibly catalyzes the transfer of the carbamoyl group from carbamoyl phosphate (CP) to the N(epsilon) atom of ornithine (ORN) to produce L-citrulline. The polypeptide is Ornithine carbamoyltransferase, catabolic (Photobacterium profundum (strain SS9)).